A 602-amino-acid polypeptide reads, in one-letter code: Threonine--tRNA ligase (602 aa).

Residues 208–499 (DHRKLGTELK…LTEHCAGEFP (292 aa)) form a catalytic region. Cys300, His351, and His476 together coordinate Zn(2+).

This sequence belongs to the class-II aminoacyl-tRNA synthetase family. As to quaternary structure, homodimer. Zn(2+) is required as a cofactor.

It is found in the cytoplasm. The catalysed reaction is tRNA(Thr) + L-threonine + ATP = L-threonyl-tRNA(Thr) + AMP + diphosphate + H(+). In terms of biological role, catalyzes the attachment of threonine to tRNA(Thr) in a two-step reaction: L-threonine is first activated by ATP to form Thr-AMP and then transferred to the acceptor end of tRNA(Thr). Also edits incorrectly charged L-seryl-tRNA(Thr). The sequence is that of Threonine--tRNA ligase from Campylobacter jejuni subsp. jejuni serotype O:23/36 (strain 81-176).